The chain runs to 155 residues: Small ribosomal subunit protein uS7 (155 aa).

Belongs to the universal ribosomal protein uS7 family. In terms of assembly, part of the 30S ribosomal subunit. Contacts proteins S9 and S11.

Its function is as follows. One of the primary rRNA binding proteins, it binds directly to 16S rRNA where it nucleates assembly of the head domain of the 30S subunit. Is located at the subunit interface close to the decoding center, probably blocks exit of the E-site tRNA. In Malacoplasma penetrans (strain HF-2) (Mycoplasma penetrans), this protein is Small ribosomal subunit protein uS7.